The chain runs to 68 residues: Small ribosomal subunit protein bS21 (68 aa).

The disordered stretch occupies residues 36–68 (YEKPSEKRARERAAAVRRSRKLERKRAERDGIR). A compositionally biased stretch (basic and acidic residues) spans 37–49 (EKPSEKRARERAA). The span at 50-59 (AVRRSRKLER) shows a compositional bias: basic residues.

The protein belongs to the bacterial ribosomal protein bS21 family.

This is Small ribosomal subunit protein bS21 from Zymomonas mobilis subsp. mobilis (strain ATCC 31821 / ZM4 / CP4).